Consider the following 184-residue polypeptide: NADH-quinone oxidoreductase subunit B (184 aa).

4 residues coordinate [4Fe-4S] cluster: C37, C38, C103, and C132.

The protein belongs to the complex I 20 kDa subunit family. In terms of assembly, NDH-1 is composed of 14 different subunits. Subunits NuoB, C, D, E, F, and G constitute the peripheral sector of the complex. It depends on [4Fe-4S] cluster as a cofactor.

Its subcellular location is the cell membrane. It carries out the reaction a quinone + NADH + 5 H(+)(in) = a quinol + NAD(+) + 4 H(+)(out). In terms of biological role, NDH-1 shuttles electrons from NADH, via FMN and iron-sulfur (Fe-S) centers, to quinones in the respiratory chain. The immediate electron acceptor for the enzyme in this species is believed to be a menaquinone. Couples the redox reaction to proton translocation (for every two electrons transferred, four hydrogen ions are translocated across the cytoplasmic membrane), and thus conserves the redox energy in a proton gradient. The chain is NADH-quinone oxidoreductase subunit B from Rhodococcus erythropolis (strain PR4 / NBRC 100887).